We begin with the raw amino-acid sequence, 138 residues long: Acidic phospholipase A2 6 (138 aa).

Residues 1 to 16 (MRTLWIMAVLLVGVEG) form the signal peptide. Intrachain disulfides connect Cys-42-Cys-131, Cys-44-Cys-60, Cys-59-Cys-111, Cys-65-Cys-138, Cys-66-Cys-104, Cys-73-Cys-97, and Cys-91-Cys-102. Ca(2+) contacts are provided by Tyr-43, Gly-45, and Gly-47. Residue His-63 is part of the active site. Residue Asp-64 coordinates Ca(2+). Residue Asp-105 is part of the active site.

It belongs to the phospholipase A2 family. Group II subfamily. D49 sub-subfamily. In terms of assembly, homodimer. Requires Ca(2+) as cofactor. Expressed by the venom gland.

The protein localises to the secreted. It catalyses the reaction a 1,2-diacyl-sn-glycero-3-phosphocholine + H2O = a 1-acyl-sn-glycero-3-phosphocholine + a fatty acid + H(+). Its function is as follows. Snake venom phospholipase A2 (PLA2) that has high lipolytic activity. PLA2 catalyzes the calcium-dependent hydrolysis of the 2-acyl groups in 3-sn-phosphoglycerides. The polypeptide is Acidic phospholipase A2 6 (Craspedocephalus gramineus (Bamboo pit viper)).